Consider the following 555-residue polypeptide: CTL-like protein DDB_G0274487 (555 aa).

Polar residues predominate over residues 1 to 17; that stretch reads MGIEDNSQQPNTGSPYG. The disordered stretch occupies residues 1–101; the sequence is MGIEDNSQQP…NLNKANDRES (101 aa). Positions 19–63 are enriched in low complexity; that stretch reads SPPSQYNPYGQQPPQQQQYNPYGEQQQQPQQQQQYGYQPQFQPTY. A compositionally biased stretch (pro residues) spans 79 to 90; it reads PFPPQQQQPPPI. The N-linked (GlcNAc...) asparagine glycan is linked to N116. Residues 138–158 form a helical membrane-spanning segment; sequence IWFSILFGLNFGLLIVVSASA. N-linked (GlcNAc...) asparagine glycosylation is present at N174. 10 helical membrane-spanning segments follow: residues 182–202, 210–230, 231–251, 284–304, 313–333, 340–360, 372–392, 405–425, 472–492, and 493–513; these read FLFA…WAWL, ESLI…YCVF, FFVW…FFII, AGYV…SAFA, AIQT…FHVI, TVSG…VGMP, LTTS…IETL, VVVK…SSIV, IAIG…LISI, and PFDM…LVII.

This sequence belongs to the CTL (choline transporter-like) family.

Its subcellular location is the membrane. This chain is CTL-like protein DDB_G0274487, found in Dictyostelium discoideum (Social amoeba).